Consider the following 435-residue polypeptide: U-box domain-containing protein 36 (435 aa).

Residues 227 to 345 (EAEASKRKAR…LKGKREEEEA (119 aa)) adopt a coiled-coil conformation. In terms of domain architecture, U-box spans 352–426 (EPPQYFICPI…QEWLQLRELL (75 aa)).

The catalysed reaction is S-ubiquitinyl-[E2 ubiquitin-conjugating enzyme]-L-cysteine + [acceptor protein]-L-lysine = [E2 ubiquitin-conjugating enzyme]-L-cysteine + N(6)-ubiquitinyl-[acceptor protein]-L-lysine.. Its pathway is protein modification; protein ubiquitination. Functionally, functions as an E3 ubiquitin ligase. The polypeptide is U-box domain-containing protein 36 (PUB36) (Arabidopsis thaliana (Mouse-ear cress)).